Consider the following 344-residue polypeptide: Protein RecA (344 aa).

66-73 (GPESSGKT) is an ATP binding site.

It belongs to the RecA family.

The protein resides in the cytoplasm. Can catalyze the hydrolysis of ATP in the presence of single-stranded DNA, the ATP-dependent uptake of single-stranded DNA by duplex DNA, and the ATP-dependent hybridization of homologous single-stranded DNAs. It interacts with LexA causing its activation and leading to its autocatalytic cleavage. The polypeptide is Protein RecA (Methylobacillus flagellatus (strain ATCC 51484 / DSM 6875 / VKM B-1610 / KT)).